We begin with the raw amino-acid sequence, 508 residues long: Amphoterin-induced protein 3 (508 aa).

The N-terminal stretch at 1–19 is a signal peptide; that stretch reads MAWLVLSGILLCMLGAGLG. Residues 20 to 383 lie on the Extracellular side of the membrane; it reads TSDLEDVLPP…ARPEPETFNT (364 aa). The LRRNT domain maps to 25 to 61; the sequence is DVLPPAPHNCPDICICAADVLSCAGRGLQDLPVALPT. 2 cysteine pairs are disulfide-bonded: Cys-34–Cys-40 and Cys-38–Cys-47. LRR repeat units lie at residues 62-83, 86-107, 110-133, 134-155, 158-178, and 184-207; these read TAAE…WLAP, RLRA…AFTN, GLRT…DGLE, ELEK…AFQG, MLSH…NHLH, and RLRT…AALP. Asn-107 carries N-linked (GlcNAc...) asparagine glycosylation. An N-linked (GlcNAc...) asparagine glycan is attached at Asn-142. Residues 219-275 enclose the LRRCT domain; the sequence is NPLPCDCSLYHLLRRWHQRGLSALHDFEREYTCLVFKVSESRVRFFEHSRVFKNCSV. 3 disulfides stabilise this stretch: Cys-223-Cys-251, Cys-225-Cys-273, and Cys-300-Cys-352. Asn-272, Asn-301, Asn-362, and Asn-368 each carry an N-linked (GlcNAc...) asparagine glycan. An Ig-like C2-type domain is found at 279 to 370; the sequence is PGLELPEEQL…HNQTLEYNVS (92 aa). Residues 384–404 form a helical membrane-spanning segment; that stretch reads GFTTLLGCIVGLVLVLLYLFA. The Cytoplasmic portion of the chain corresponds to 405–508; that stretch reads PPCRGCCHCC…STGSEGLVMS (104 aa).

Belongs to the immunoglobulin superfamily. AMIGO family. As to quaternary structure, binds AMIGO1 or AMIGO2. Ubiquitous.

The protein localises to the membrane. In terms of biological role, may mediate heterophilic cell-cell interaction. May contribute to signal transduction through its intracellular domain. The protein is Amphoterin-induced protein 3 of Mus musculus (Mouse).